Reading from the N-terminus, the 406-residue chain is Ascaroside receptor GPR2 (406 aa).

Over 1 to 29 the chain is Extracellular; the sequence is MTQLPYLLDRRGGALAAPATAWGDMMLNR. Residues 30-50 traverse the membrane as a helical segment; it reads ALFSVALLSSVGSAWVVLSYA. Residues 51–61 lie on the Cytoplasmic side of the membrane; sequence CIKELRSYRHQ. The chain crosses the membrane as a helical span at residues 62–82; that stretch reads LILGLAISDLLMSLNFMFSAG. Residues 83–107 lie on the Extracellular side of the membrane; it reads WNVAGGDLALEESRTACSVNGFLTQ. The cysteines at positions 99 and 173 are disulfide-linked. A helical transmembrane segment spans residues 108-128; sequence VFVVQTDWWILVIAIATYIIL. At 129-143 the chain is on the cytoplasmic side; that stretch reads GNFKTQSQFIQTHVW. Residues 144–164 traverse the membrane as a helical segment; the sequence is IPWVGPWVLSIIIAAICHGVL. Residues 165-185 lie on the Extracellular side of the membrane; that stretch reads GYGYIGGWCWLTSDLMRLLIN. The chain crosses the membrane as a helical span at residues 186 to 206; the sequence is FIPRWLIVIAIALIYIRLYMI. The Cytoplasmic segment spans residues 207–326; it reads VRKARKWDIE…AAQLKRIAKK (120 aa). Residues 327-347 traverse the membrane as a helical segment; sequence MMVYPVAYAIIWACPTAIRIY. Residues 348–356 lie on the Extracellular side of the membrane; the sequence is QGTTGSRAP. Residues 357–377 traverse the membrane as a helical segment; it reads LWITIVDKSCIVIQGLVDAVV. At 378 to 406 the chain is on the cytoplasmic side; the sequence is YGLNERAWQGWRDHIRRIIYKNEGGRIIG.

It belongs to the G-protein coupled receptor 1 family. Interacts with ascaroside receptor GPR3; may form a functional heterodimer. Interacts with guanine nucleotide-binding protein alpha GPA2; to activate adenylate cyclase and positively regulate nematode trap formation.

The protein localises to the cell membrane. In terms of biological role, g protein-coupled receptor that senses nematode ascaroside pheromones and signals via adenylate cyclase to positively regulate trap formation for nematode capture. This chain is Ascaroside receptor GPR2, found in Arthrobotrys oligospora (strain ATCC 24927 / CBS 115.81 / DSM 1491) (Nematode-trapping fungus).